The primary structure comprises 95 residues: Fungal defensin plectasin (95 aa).

The first 23 residues, 1 to 23 (MQFTTILSIGITVFGLLNTGAFA), serve as a signal peptide directing secretion. A propeptide spanning residues 24-55 (APQPVPEAYAVSDPEAHPDDFAGMDANQLQKR) is cleaved from the precursor. Residues Phe57, Gly58, and Cys59 each coordinate beta-D-GlcNAc-(1-&gt;4)-Mur2Ac(oyl-L-Ala-gamma-D-Glu-L-Lys-D-Ala-D-Ala)-di-trans,octa-cis-undecaprenyl diphosphate. Cystine bridges form between Cys59–Cys85, Cys70–Cys92, and Cys74–Cys94. A binds to membrane interface region spans residues 61–64 (GPWD). Residues Asp67, His73, Tyr84, Ala86, Gly88, Cys92, and Lys93 each contribute to the beta-D-GlcNAc-(1-&gt;4)-Mur2Ac(oyl-L-Ala-gamma-D-Glu-L-Lys-D-Ala-D-Ala)-di-trans,octa-cis-undecaprenyl diphosphate site. The binds to membrane interface stretch occupies residues 86-92 (AKGGFVC).

The protein belongs to the invertebrate defensin family. Type 2 subfamily.

The protein localises to the secreted. The protein resides in the host cell membrane. Antimicrobial peptide that potently acts against several species of Gram-positive bacteria. It selectively inhibits peptidoglycan biosynthesis through complex formation with the cell wall precursor lipid II (1:1 molar ratio) thus inhibiting cell wall synthesis. It does not disrupt cell membranes. Is especially active against numerous clinical isolates of S.pneumoniae, including all 90 different serotypes and isolates resistant to clinically used antibiotics. In vitro, shows considerable selectivity for bacteria over mammalian cells. The peptide synthesized in D-amino acids does not show antibacterial activity. In vitro, acts on voltage-gated potassium channels by moderately inhibiting mammalian Kv1.3/KCNA3 (IC(50)=2.8 uM), and moderately inhibiting others potassium channels. This is Fungal defensin plectasin (DEF) from Pseudoplectania nigrella (Ebony cup).